A 285-amino-acid chain; its full sequence is Sulfoquinovosyl glycerol transport system permease protein SmoH (285 aa).

Helical transmembrane passes span 21–41, 83–103, 115–135, 150–170, 195–215, and 250–270; these read FIAASILLVNGLFPAIWILFT, FMVALLSTALTILISVLAAYA, ILSLIIAVSTFPLVTLLVPLF, LILPYTVLSLPVCTLMLVSFF, VVVPLCAPGVFTAGILAFVNA, and PVISAALVVGIVPVAILIVIF. The ABC transmembrane type-1 domain occupies 79 to 270; that stretch reads LFNSFMVALL…VPVAILIVIF (192 aa).

The protein belongs to the binding-protein-dependent transport system permease family. In terms of assembly, the complex is probably composed of two ATP-binding proteins (SmoE), two transmembrane proteins (SmoG and SmoH) and a solute-binding protein (SmoF).

The protein resides in the cell inner membrane. In terms of biological role, part of the ABC transporter complex SmoEFGH involved in sulfoquinovosyl glycerol (SQGro) uptake. Responsible for the translocation of the substrate across the membrane. This is Sulfoquinovosyl glycerol transport system permease protein SmoH from Agrobacterium fabrum (strain C58 / ATCC 33970) (Agrobacterium tumefaciens (strain C58)).